We begin with the raw amino-acid sequence, 450 residues long: Magnesium transporter MgtE (450 aa).

Residues 1–283 (MEEKLAVSLQ…SEAGPVALWL (283 aa)) lie on the Cytoplasmic side of the membrane. Glu59, Asp91, Asp95, and Gly136 together coordinate Mg(2+). CBS domains follow at residues 138 to 200 (MTPE…RVAE) and 202 to 258 (MNPK…EATE). ATP-binding residues include Tyr170, Ser185, Arg187, Asp188, and Val207. 8 residues coordinate Mg(2+): Glu216, Ala223, Asp226, Asp247, Asp250, Glu255, Glu258, and Asp259. Glu275 contributes to the Ca(2+) binding site. Mn(2+) is bound by residues Glu275, Gln304, Glu307, and Glu311. A helical transmembrane segment spans residues 284 to 306 (ARVRWLVILILTGMVTSSILQGF). The Periplasmic portion of the chain corresponds to 307–315 (ESVLEAVTA). Ca(2+) is bound at residue Glu311. The helical transmembrane segment at 316-337 (LAFYVPVLLGTGGNTGNQSATL) threads the bilayer. Residues 338–351 (IIRALATRDLDLRD) are Cytoplasmic-facing. Residues 352 to 381 (WRRVFLKEMGVGLLLGLTLSFLLVGKVYWD) traverse the membrane as a helical segment. Over 382–385 (GHPL) the chain is Periplasmic. His383 contacts Mn(2+). Residues 386–409 (LLPVVGVSLVLIVFFANLVGAMLP) traverse the membrane as a helical segment. The Cytoplasmic segment spans residues 410-420 (FLLRRLGVDPA). Residues Asp418, Ala428, and Asp432 each coordinate Mg(2+). Residues 421-443 (LVSNPLVATLSDVTGLLIYLSVA) form a helical membrane-spanning segment. Residues 444 to 450 (RLLLEAV) are Periplasmic-facing.

Belongs to the SLC41A transporter family. In terms of assembly, homodimer.

Its subcellular location is the cell inner membrane. The enzyme catalyses Mg(2+)(in) = Mg(2+)(out). The channel activity is regulated via the N-terminal cytoplasmic region, which acts as a Mg(2+) sensor to regulate the gating of the ion-conducting pore in response to the intracellular magnesium concentration. Under high-intracellular magnesium conditions, binding of magnesium to the N-terminal cytoplasmic domain stabilizes the closed conformation of the channel. Under low-intracellular magnesium conditions, the channel is in equilibrium between the open and closed states. A cation-binding site within the membrane (M1) strictly recognizes the size and geometry of the Mg(2+) hydration shells, which may be important for the selective transport of Mg(2+) over other cations. Cation-binding sites on the periplasmic side (M2 and M3) regulate channel opening and prevent conduction of near-cognate cations. Binding of Mn(2+) to the periplasmic sites strongly inhibits the Mg(2+) transport activity. In addition, activity is regulated by ATP, which binds to MgtE and modulates its Mg(2+)-dependent channel gating. ATP binding enhances the intracellular domain affinity for Mg(2+) within physiological concentrations of this divalent cation, enabling MgtE to function as an in vivo Mg(2+) sensor. ATP dissociation from MgtE upregulates Mg(2+) influx at both high and low intracellular Mg(2+) concentrations. In terms of biological role, highly selective magnesium channel that plays an important role in Mg(2+) homeostasis. Functions as a Mg(2+)-dependent gating channel. Exhibits low activity with cobalt, suggesting that it might also be involved in the uptake of Co(2+) as a micronutrient. Also exhibits low activity with Ca(2+), but it shows almost no activity with Mn(2+). This chain is Magnesium transporter MgtE, found in Thermus thermophilus (strain ATCC 27634 / DSM 579 / HB8).